Reading from the N-terminus, the 309-residue chain is Homoserine O-succinyltransferase (309 aa).

C142 serves as the catalytic Acyl-thioester intermediate. Substrate is bound by residues K163 and S192. H235 (proton acceptor) is an active-site residue. The active site involves E237. R249 is a binding site for substrate.

Belongs to the MetA family. Homodimer.

It localises to the cytoplasm. The enzyme catalyses L-homoserine + succinyl-CoA = O-succinyl-L-homoserine + CoA. It functions in the pathway amino-acid biosynthesis; L-methionine biosynthesis via de novo pathway; O-succinyl-L-homoserine from L-homoserine: step 1/1. Transfers a succinyl group from succinyl-CoA to L-homoserine, forming succinyl-L-homoserine. This Salmonella choleraesuis (strain SC-B67) protein is Homoserine O-succinyltransferase.